The chain runs to 231 residues: Probable septum site-determining protein MinC (231 aa).

This sequence belongs to the MinC family. As to quaternary structure, interacts with MinD and FtsZ.

Functionally, cell division inhibitor that blocks the formation of polar Z ring septums. Rapidly oscillates between the poles of the cell to destabilize FtsZ filaments that have formed before they mature into polar Z rings. Prevents FtsZ polymerization. This is Probable septum site-determining protein MinC from Bradyrhizobium diazoefficiens (strain JCM 10833 / BCRC 13528 / IAM 13628 / NBRC 14792 / USDA 110).